The chain runs to 93 residues: Cell division topological specificity factor (93 aa).

This sequence belongs to the MinE family.

Its function is as follows. Prevents the cell division inhibition by proteins MinC and MinD at internal division sites while permitting inhibition at polar sites. This ensures cell division at the proper site by restricting the formation of a division septum at the midpoint of the long axis of the cell. The polypeptide is Cell division topological specificity factor (Syntrophus aciditrophicus (strain SB)).